Consider the following 152-residue polypeptide: Large ribosomal subunit protein bL9 (152 aa).

It belongs to the bacterial ribosomal protein bL9 family.

In terms of biological role, binds to the 23S rRNA. The protein is Large ribosomal subunit protein bL9 of Prochlorococcus marinus (strain NATL2A).